The primary structure comprises 126 residues: Holo-[acyl-carrier-protein] synthase (126 aa).

Residues D8 and E56 each coordinate Mg(2+).

The protein belongs to the P-Pant transferase superfamily. AcpS family. Mg(2+) is required as a cofactor.

The protein localises to the cytoplasm. It catalyses the reaction apo-[ACP] + CoA = holo-[ACP] + adenosine 3',5'-bisphosphate + H(+). Its function is as follows. Transfers the 4'-phosphopantetheine moiety from coenzyme A to a Ser of acyl-carrier-protein. The protein is Holo-[acyl-carrier-protein] synthase of Clostridium tetani (strain Massachusetts / E88).